The chain runs to 135 residues: Sex-regulated protein janus-A (135 aa).

Lys-37 is a binding site for substrate. His-63 (proton acceptor) is an active-site residue. 104 to 106 (SQG) provides a ligand contact to substrate.

Belongs to the janus family.

Its function is as follows. JanA and janB regulate somatic sex differentiation. The sequence is that of Sex-regulated protein janus-A (janA) from Drosophila yakuba (Fruit fly).